The primary structure comprises 1135 residues: Envelopment polyprotein (1135 aa).

An N-terminal signal peptide occupies residues 1 to 35 (MRILKLLELVVKVSLFTIALSSVLLAFLTFRATDA). Topologically, residues 36-314 (KVEIIRGDHP…KYSKSIYKQT (279 aa)) are lumenal. The Cell attachment site signature appears at 41 to 43 (RGD). N-linked (GlcNAc...) asparagine; by host glycosylation occurs at asparagine 116. An intrachain disulfide couples cysteine 122 to cysteine 156. The non-covalent dimerization stretch occupies residues 177-195 (LDNKRHFSVGTNFFIPESL). N-linked (GlcNAc...) asparagine; by host glycosylation is present at asparagine 210. A disulfide bridge connects residues cysteine 224 and cysteine 285. Residues 315–366 (ACINFSWIRLILIALLIYFPIRWLVNKTTKPLFLWYDLMGLITYPVLLLINC) traverse the membrane as a helical segment. At 367–484 (LWKYFPFKCS…VPGCPFLVTS (118 aa)) the chain is on the cytoplasmic side. The segment at 437–484 (LSLSLLKFVTEILIGLVILSQIPMSMAQTTQCLSGCFYVPGCPFLVTS) is signal for signal peptide peptidase. At 485–1067 (KFEKCPEKDQ…YFGSFFDTIR (583 aa)) the chain is on the lumenal side. N-linked (GlcNAc...) asparagine; by host glycosylation is found at asparagine 588, asparagine 605, and asparagine 980. Residues 1068–1088 (VVLLIAFIFLVIYFCSILTSI) traverse the membrane as a helical segment. Residues 1089-1135 (CKGYVKHKSYKSRSKIEDDDEPEIKAPMLMKDTMTRRRPPMDFSHLV) lie on the Cytoplasmic side of the membrane.

It belongs to the tospovirus envelope glycoprotein family. Homodimer; disulfide-linked. Heterodimer with Glycoprotein C. Interacts with nucleoprotein. In terms of assembly, heterodimer with Glycoprotein N. Interacts with nucleoprotein. Post-translationally, specific enzymatic cleavages in vivo yield mature proteins including Glycoprotein N and Glycoprotein C. In terms of processing, glycosylated with O-linked glycans. Glycosylation is essential for proper subcellular location. Cleaved at acidic pH.

The protein resides in the virion membrane. It is found in the host Golgi apparatus membrane. The protein localises to the host endoplasmic reticulum membrane. Forms the spikes present at the surface of the virion together with Glycoprotein C. They are able to attach the virion to a cell receptor and to promote fusion of membranes after endocytosis of the virion. Plays a role in virus binding and/or entry into the vector midgut. Functionally, forms the spikes present at the surface of the virion together with Glycoprotein N. They are able to attach the virion to a cell receptor and to promote fusion of membranes after endocytosis of the virion. Probable class II fusion protein. This chain is Envelopment polyprotein (GP), found in Frankliniella occidentalis (Western flower thrips).